The following is a 256-amino-acid chain: Kallikrein-15 (256 aa).

An N-terminal signal peptide occupies residues 1-16 (MWLLLTLSFLLASTAA). A propeptide spans 17–21 (QDGDK) (activation peptide). The Peptidase S1 domain occupies 22-254 (LLEGDECAPH…YLEWIRETMK (233 aa)). C47 and C63 are oxidised to a cystine. Catalysis depends on charge relay system residues H62 and D106. 3 disulfide bridges follow: C138–C215, C180–C194, and C205–C230. N-linked (GlcNAc...) asparagine glycosylation is present at N171. Residue S209 is the Charge relay system of the active site. A glycan (N-linked (GlcNAc...) asparagine) is linked at N232.

This sequence belongs to the peptidase S1 family. Kallikrein subfamily. As to expression, highest expression in the thyroid gland. Also expressed in the prostate, salivary, and adrenal glands and in the colon testis and kidney.

The protein resides in the secreted. In terms of biological role, protease whose physiological substrate is not yet known. The protein is Kallikrein-15 (KLK15) of Homo sapiens (Human).